The following is a 101-amino-acid chain: Large ribosomal subunit protein uL23 (101 aa).

The protein belongs to the universal ribosomal protein uL23 family. As to quaternary structure, part of the 50S ribosomal subunit. Contacts protein L29, and trigger factor when it is bound to the ribosome.

One of the early assembly proteins it binds 23S rRNA. One of the proteins that surrounds the polypeptide exit tunnel on the outside of the ribosome. Forms the main docking site for trigger factor binding to the ribosome. The protein is Large ribosomal subunit protein uL23 of Kocuria rhizophila (strain ATCC 9341 / DSM 348 / NBRC 103217 / DC2201).